A 113-amino-acid polypeptide reads, in one-letter code: Large ribosomal subunit protein uL22 (113 aa).

Belongs to the universal ribosomal protein uL22 family. Part of the 50S ribosomal subunit.

This protein binds specifically to 23S rRNA; its binding is stimulated by other ribosomal proteins, e.g. L4, L17, and L20. It is important during the early stages of 50S assembly. It makes multiple contacts with different domains of the 23S rRNA in the assembled 50S subunit and ribosome. Functionally, the globular domain of the protein is located near the polypeptide exit tunnel on the outside of the subunit, while an extended beta-hairpin is found that lines the wall of the exit tunnel in the center of the 70S ribosome. In Neorickettsia sennetsu (strain ATCC VR-367 / Miyayama) (Ehrlichia sennetsu), this protein is Large ribosomal subunit protein uL22.